Here is a 155-residue protein sequence, read N- to C-terminus: FHA domain-containing protein FhaB (155 aa).

A helical membrane pass occupies residues 6–28 (LQLTRVGFLLLLWLFIWSVLRIL). Thr-36 is subject to Phosphothreonine. An FHA domain is found at 83–132 (VLIGRADDSTLVLTDDYASTRHARLSPRGSEWYVEDLGSTNGTYLDRAKV).

Post-translationally, phosphorylated by PknB. Dephosphorylated by PstP.

The protein resides in the cell membrane. In Mycolicibacterium smegmatis (strain ATCC 700084 / mc(2)155) (Mycobacterium smegmatis), this protein is FHA domain-containing protein FhaB (fhaB).